The sequence spans 152 residues: Ribosome maturation factor RimP (152 aa).

The protein belongs to the RimP family.

It is found in the cytoplasm. In terms of biological role, required for maturation of 30S ribosomal subunits. This is Ribosome maturation factor RimP from Serratia proteamaculans (strain 568).